A 397-amino-acid polypeptide reads, in one-letter code: Lysophospholipid transporter LplT (397 aa).

The Periplasmic segment spans residues 1–17 (MSESVHTNTSLWSKGMK). The helical transmembrane segment at 18–38 (AVIVAQFLSAFGDNALLFATL) threads the bilayer. The Cytoplasmic segment spans residues 39 to 52 (ALLKAQFYPEWSQP). The chain crosses the membrane as a helical span at residues 53-73 (VLQMVFVGAYILFAPFVGQVA). At 74 to 90 (DSFAKGRVMMFANGLKL) the chain is on the periplasmic side. Residues 91–111 (LGAASICFGFNPFVGYTLVGI) traverse the membrane as a helical segment. Topologically, residues 112–144 (GAAAYSPAKYGILGELTTGDKLVKANGLMEAST) are cytoplasmic. The chain crosses the membrane as a helical span at residues 145–165 (IAAILLGSVAGGVLADLHVLV). Residue A166 is a topological domain, periplasmic. A helical membrane pass occupies residues 167–187 (LAACALAYAGAVAANIYIPKL). Residues 188-226 (AAARPGQSWNVLKMTCSFKSACTSLWQNGETRFSLVGTS) are Cytoplasmic-facing. A helical transmembrane segment spans residues 227-247 (LFWGAGVTLRFLLVLWVPVAL). Residues 248-256 (GITDNATPT) are Periplasmic-facing. Residues 257 to 277 (YLNAMVAIGIVLGAGAAAKLV) form a helical membrane-spanning segment. The Cytoplasmic segment spans residues 278–280 (TLE). The chain crosses the membrane as a helical span at residues 281–301 (TVSRCMPAGILIGVVVLFFSL). Topologically, residues 302-304 (QHE) are periplasmic. A helical transmembrane segment spans residues 305-325 (LLPAYALLMLIGVLGGFFVVP). Over 326 to 343 (LNALLQERGKKSVGAGNA) the chain is Cytoplasmic. A helical membrane pass occupies residues 344 to 364 (IAVQNLGENSAMLLMLGIYSL). Residues 365–366 (AV) are Periplasmic-facing. Residues 367–387 (LVGIPVVPIGIGFGTLFALAI) traverse the membrane as a helical segment. Residues 388–397 (TALWIWQRRH) are Cytoplasmic-facing.

Belongs to the major facilitator superfamily. LplT (TC 2.A.1.42) family.

It localises to the cell inner membrane. Catalyzes the facilitated diffusion of 2-acyl-glycero-3-phosphoethanolamine (2-acyl-GPE) into the cell. The protein is Lysophospholipid transporter LplT of Escherichia fergusonii (strain ATCC 35469 / DSM 13698 / CCUG 18766 / IAM 14443 / JCM 21226 / LMG 7866 / NBRC 102419 / NCTC 12128 / CDC 0568-73).